Here is a 221-residue protein sequence, read N- to C-terminus: Small ribosomal subunit protein uS4c (221 aa).

The disordered stretch occupies residues 26–53; that stretch reads RKRTDNRCMPGQHRKKRNDSTKKTKNSK. Basic residues predominate over residues 37-53; sequence QHRKKRNDSTKKTKNSK. The S4 RNA-binding domain occupies 103–161; that stretch reads MRLDNIVFRLGMAPTIPAARQLVNHGHIVVNNKKVDISSYQCQSQDVISVTKNKTIRTL.

The protein belongs to the universal ribosomal protein uS4 family. In terms of assembly, part of the 30S ribosomal subunit. Contacts protein S5. The interaction surface between S4 and S5 is involved in control of translational fidelity.

Its subcellular location is the plastid. It is found in the chloroplast. Its function is as follows. One of the primary rRNA binding proteins, it binds directly to 16S rRNA where it nucleates assembly of the body of the 30S subunit. Functionally, with S5 and S12 plays an important role in translational accuracy. This is Small ribosomal subunit protein uS4c (rps4) from Pleurastrum terricola (Filamentous green alga).